The chain runs to 1845 residues: Proteasome activator complex subunit 4 (1845 aa).

Basic and acidic residues predominate over residues 1-13; the sequence is MEPAERAGGRDPL. The interval 1–26 is disordered; the sequence is MEPAERAGGRDPLEPGGRPGPDPQGF. HEAT repeat units lie at residues 475–519 and 1000–1039; these read PEGP…LVDC and NFCCRDIIPLVLGFLRPDRQDVTQQQFKGALYCLLGNHSG. S1123 carries the phosphoserine modification. HEAT repeat units lie at residues 1181 to 1219 and 1356 to 1394; these read RVLPLRAIRFFVENLNHDAIVVRKMAISAVAGILKQLKR and DAFLPVLKPHLERLVADSHESTQRCVAEIIAGLIRGSKH. Phosphoserine is present on S1616. HEAT repeat units lie at residues 1638 to 1676 and 1682 to 1720; these read PHQVPLVLQVLNQTARSSSWHARYTVLTYLQTMVFYNLF and EDAVKDIRWLVISLLEDEQLEVREMAATTLSGLLQCNFL. The interval 1652–1740 is bromodomain-like (BRDL); the sequence is ARSSSWHARY…EQLCKTKLPK (89 aa).

This sequence belongs to the BLM10 family. As to quaternary structure, homodimer. Component of the spermatoproteasome, a form of the proteasome specifically found in testis. Interacts with the 20S and 26S proteasomes. In terms of processing, phosphorylated.

The protein resides in the cytoplasm. It localises to the cytosol. The protein localises to the nucleus. Its subcellular location is the nucleus speckle. Functionally, associated component of the proteasome that specifically recognizes acetylated histones and promotes ATP- and ubiquitin-independent degradation of core histones during spermatogenesis and DNA damage response. Recognizes and binds acetylated histones via its bromodomain-like (BRDL) region and activates the proteasome by opening the gated channel for substrate entry. Binds to the core proteasome via its C-terminus, which occupies the same binding sites as the proteasomal ATPases, opening the closed structure of the proteasome via an active gating mechanism. Component of the spermatoproteasome, a form of the proteasome specifically found in testis: binds to acetylated histones and promotes degradation of histones, thereby participating actively to the exchange of histones during spermatogenesis. Also involved in DNA damage response in somatic cells, by promoting degradation of histones following DNA double-strand breaks. The polypeptide is Proteasome activator complex subunit 4 (PSME4) (Bos taurus (Bovine)).